We begin with the raw amino-acid sequence, 263 residues long: uncharacterized protein (263 aa).

The next 7 helical transmembrane spans lie at M1 to Q21, L38 to Y58, I82 to V102, G118 to Y138, G151 to L171, F196 to T216, and F230 to V250.

The protein resides in the membrane. This is an uncharacterized protein from Saccharomyces cerevisiae (strain ATCC 204508 / S288c) (Baker's yeast).